We begin with the raw amino-acid sequence, 431 residues long: UDP-N-acetylglucosamine 1-carboxyvinyltransferase (431 aa).

22-23 (KN) provides a ligand contact to phosphoenolpyruvate. Arg-102 is a binding site for UDP-N-acetyl-alpha-D-glucosamine. Catalysis depends on Cys-126, which acts as the Proton donor. Residue Cys-126 is modified to 2-(S-cysteinyl)pyruvic acid O-phosphothioketal. UDP-N-acetyl-alpha-D-glucosamine is bound by residues Asp-318 and Ile-340.

This sequence belongs to the EPSP synthase family. MurA subfamily.

It is found in the cytoplasm. The enzyme catalyses phosphoenolpyruvate + UDP-N-acetyl-alpha-D-glucosamine = UDP-N-acetyl-3-O-(1-carboxyvinyl)-alpha-D-glucosamine + phosphate. It participates in cell wall biogenesis; peptidoglycan biosynthesis. Functionally, cell wall formation. Adds enolpyruvyl to UDP-N-acetylglucosamine. The chain is UDP-N-acetylglucosamine 1-carboxyvinyltransferase from Bartonella tribocorum (strain CIP 105476 / IBS 506).